The following is a 309-amino-acid chain: Fructosamine-3-kinase (309 aa).

Met1 carries the N-acetylmethionine modification. 89–91 contributes to the ATP binding site; sequence EHL. Asp217 (proton acceptor) is an active-site residue.

This sequence belongs to the fructosamine kinase family. In terms of assembly, monomer. In terms of tissue distribution, widely expressed. Expressed in erythrocytes.

The enzyme catalyses N(6)-(D-fructosyl)-L-lysyl-[protein] + ATP = N(6)-(3-O-phospho-D-fructosyl)-L-lysyl-[protein] + ADP + H(+). It carries out the reaction N(6)-D-ribulosyl-L-lysyl-[protein] + ATP = N(6)-(3-O-phospho-D-ribulosyl)-L-lysyl-[protein] + ADP + H(+). The catalysed reaction is N(6)-(D-psicosyl)-L-lysyl-[protein] + ATP = N(6)-(3-O-phospho-D-psicosyl)-L-lysyl-[protein] + ADP + H(+). In terms of biological role, fructosamine-3-kinase involved in protein deglycation by mediating phosphorylation of fructoselysine residues on glycated proteins, to generate fructoselysine-3 phosphate. Fructoselysine-3 phosphate adducts are unstable and decompose under physiological conditions. Involved in intracellular deglycation in erythrocytes. Involved in the response to oxidative stress by mediating deglycation of NFE2L2/NRF2, glycation impairing NFE2L2/NRF2 function. Also able to phosphorylate psicosamines and ribulosamines. The sequence is that of Fructosamine-3-kinase from Homo sapiens (Human).